The following is a 351-amino-acid chain: UDP-3-O-acylglucosamine N-acyltransferase (351 aa).

The Proton acceptor role is filled by His240.

The protein belongs to the transferase hexapeptide repeat family. LpxD subfamily. As to quaternary structure, homotrimer.

It catalyses the reaction a UDP-3-O-[(3R)-3-hydroxyacyl]-alpha-D-glucosamine + a (3R)-hydroxyacyl-[ACP] = a UDP-2-N,3-O-bis[(3R)-3-hydroxyacyl]-alpha-D-glucosamine + holo-[ACP] + H(+). Its pathway is bacterial outer membrane biogenesis; LPS lipid A biosynthesis. Its function is as follows. Catalyzes the N-acylation of UDP-3-O-acylglucosamine using 3-hydroxyacyl-ACP as the acyl donor. Is involved in the biosynthesis of lipid A, a phosphorylated glycolipid that anchors the lipopolysaccharide to the outer membrane of the cell. The protein is UDP-3-O-acylglucosamine N-acyltransferase of Pseudomonas syringae pv. tomato (strain ATCC BAA-871 / DC3000).